The sequence spans 247 residues: Adenosylcobinamide-GDP ribazoletransferase (247 aa).

The next 5 membrane-spanning stretches (helical) occupy residues 34–54 (IITF…VFMV), 59–79 (CGVP…TGGF), 113–133 (GGLA…ELTL), 138–158 (ILAS…LLMY), and 194–214 (VLLP…AIFI).

This sequence belongs to the CobS family. It depends on Mg(2+) as a cofactor.

The protein resides in the cell inner membrane. It catalyses the reaction alpha-ribazole + adenosylcob(III)inamide-GDP = adenosylcob(III)alamin + GMP + H(+). The catalysed reaction is alpha-ribazole 5'-phosphate + adenosylcob(III)inamide-GDP = adenosylcob(III)alamin 5'-phosphate + GMP + H(+). Its pathway is cofactor biosynthesis; adenosylcobalamin biosynthesis; adenosylcobalamin from cob(II)yrinate a,c-diamide: step 7/7. In terms of biological role, joins adenosylcobinamide-GDP and alpha-ribazole to generate adenosylcobalamin (Ado-cobalamin). Also synthesizes adenosylcobalamin 5'-phosphate from adenosylcobinamide-GDP and alpha-ribazole 5'-phosphate. The protein is Adenosylcobinamide-GDP ribazoletransferase of Escherichia coli O127:H6 (strain E2348/69 / EPEC).